Reading from the N-terminus, the 436-residue chain is 3-ketoacyl-CoA thiolase (436 aa).

Cysteine 99 functions as the Acyl-thioester intermediate in the catalytic mechanism. Active-site proton acceptor residues include histidine 392 and cysteine 422.

The protein belongs to the thiolase-like superfamily. Thiolase family. As to quaternary structure, heterotetramer of two alpha chains (FadJ) and two beta chains (FadI).

Its subcellular location is the cytoplasm. The catalysed reaction is an acyl-CoA + acetyl-CoA = a 3-oxoacyl-CoA + CoA. It functions in the pathway lipid metabolism; fatty acid beta-oxidation. Functionally, catalyzes the final step of fatty acid oxidation in which acetyl-CoA is released and the CoA ester of a fatty acid two carbons shorter is formed. The polypeptide is 3-ketoacyl-CoA thiolase (Alteromonas mediterranea (strain DSM 17117 / CIP 110805 / LMG 28347 / Deep ecotype)).